Consider the following 437-residue polypeptide: ATP-dependent RNA helicase RhlB (437 aa).

Positions 9-37 match the Q motif motif; the sequence is QKFADLGLKPQVTEGLEKKGFEYCTPIQA. Residues 40-219 enclose the Helicase ATP-binding domain; sequence LPVLLTGQDI…FEHMHNPEHV (180 aa). Residue 53–60 participates in ATP binding; that stretch reads AQTGTGKT. A DEAD box motif is present at residues 165 to 168; it reads DEAD. In terms of domain architecture, Helicase C-terminal spans 245 to 390; the sequence is ALLQTLIEEE…VSDYDASALI (146 aa). The segment at 395–437 is disordered; sequence APLRMRAPRTQQRRTNTGGTRSGNRKPQGRRPRQPRQSAPKQS. Residues 403 to 413 are compositionally biased toward low complexity; the sequence is RTQQRRTNTGG. Residues 417–428 show a composition bias toward basic residues; that stretch reads GNRKPQGRRPRQ.

This sequence belongs to the DEAD box helicase family. RhlB subfamily. In terms of assembly, component of the RNA degradosome, which is a multiprotein complex involved in RNA processing and mRNA degradation.

It is found in the cytoplasm. The catalysed reaction is ATP + H2O = ADP + phosphate + H(+). Functionally, DEAD-box RNA helicase involved in RNA degradation. Has RNA-dependent ATPase activity and unwinds double-stranded RNA. The protein is ATP-dependent RNA helicase RhlB of Vibrio campbellii (strain ATCC BAA-1116).